The sequence spans 405 residues: Arginine deiminase (405 aa).

Catalysis depends on Cys395, which acts as the Amidino-cysteine intermediate.

This sequence belongs to the arginine deiminase family.

Its subcellular location is the cytoplasm. It catalyses the reaction L-arginine + H2O = L-citrulline + NH4(+). It participates in amino-acid degradation; L-arginine degradation via ADI pathway; carbamoyl phosphate from L-arginine: step 1/2. The polypeptide is Arginine deiminase (Rhodococcus jostii (strain RHA1)).